A 3357-amino-acid polypeptide reads, in one-letter code: Versican core protein (3357 aa).

An N-terminal signal peptide occupies residues 1–23 (MLINMKGILWMCSTLLLTHALHQ). The region spanning 24–146 (AKMETSPPVK…EDTQDTMSLA (123 aa)) is the Ig-like V-type domain. 5 disulfide bridges follow: Cys-44-Cys-130, Cys-172-Cys-243, Cys-196-Cys-217, Cys-270-Cys-333, and Cys-294-Cys-315. Asn-57 is a glycosylation site (N-linked (GlcNAc...) asparagine). Link domains follow at residues 150 to 245 (VVFH…YCYV) and 251 to 347 (DVFH…YCFK). N-linked (GlcNAc...) asparagine glycosylation is found at Asn-330, Asn-351, and Asn-441. Residues 348 to 1308 (PKQNISEATT…IIEVRENKTG (961 aa)) form a GAG-alpha (glucosaminoglycan attachment domain) region. Over residues 625-634 (EPKTNGKVTE) the composition is skewed to basic and acidic residues. The segment at 625-646 (EPKTNGKVTEDEFGQSQPTTTF) is disordered. Ser-660 is a glycosylation site (O-linked (Xyl...) (chondroitin sulfate) serine). Disordered regions lie at residues 801-863 (WPGD…KPLE) and 881-908 (TSTSIGSAEKSASGEPTTGDRFLPTTST). Asn-807 is a glycosylation site (N-linked (GlcNAc...) asparagine). Residues Asn-914 and Asn-951 are each glycosylated (N-linked (GlcNAc...) asparagine). 2 disordered regions span residues 1010–1088 (SPGA…YPPG) and 1252–1288 (DHMTSKPPVTQPTRPSVVERKTTSKTQELSTSTPAAG). Composition is skewed to polar residues over residues 1017–1042 (TGVSQGETQEEPQTPGSPFPTFSSTA) and 1275–1286 (SKTQELSTSTPA). N-linked (GlcNAc...) asparagine glycans are attached at residues Asn-1305 and Asn-1371. The segment at 1309–3051 (RLSDMIVSGH…VEGTAVYLPG (1743 aa)) is GAG-beta. The segment covering 1396–1406 (DPEAAEARRGQ) has biased composition (basic and acidic residues). Disordered stretches follow at residues 1396-1421 (DPEAAEARRGQYESVAPSQNFPDSSA) and 1458-1524 (TYPE…AIEQ). 2 stretches are compositionally biased toward polar residues: residues 1411 to 1421 (APSQNFPDSSA) and 1487 to 1498 (WSESITESSPNL). O-linked (Xyl...) (chondroitin sulfate) serine glycans are attached at residues Ser-1517 and Ser-1599. The tract at residues 1664–1705 (LPSPDARPTTVWNSNSTSEWVSDKSFEGRKKKENEDEEGAVN) is disordered. The span at 1673-1683 (TVWNSNSTSEW) shows a compositional bias: polar residues. A glycan (N-linked (GlcNAc...) asparagine) is linked at Asn-1678. Residues 1684–1697 (VSDKSFEGRKKKEN) show a composition bias toward basic and acidic residues. 2 O-linked (Xyl...) (chondroitin sulfate) serine glycosylation sites follow: Ser-1907 and Ser-1931. Residues 1926–1965 (VGMGGSDDERVRDTQTSSSIPTTSDNIYPVPDSKGPDSTV) form a disordered region. Residues 1939-1951 (TQTSSSIPTTSDN) show a composition bias toward polar residues. A glycan (N-linked (GlcNAc...) asparagine) is linked at Asn-2053. 2 O-linked (Xyl...) (chondroitin sulfate) serine glycosylation sites follow: Ser-2219 and Ser-2226. N-linked (GlcNAc...) asparagine glycosylation is present at Asn-2243. Over residues 2308–2322 (TLSHTGTEEPTTSTL) the composition is skewed to polar residues. Disordered stretches follow at residues 2308 to 2374 (TLSH…ATSP) and 2475 to 2494 (YPTSTLPSTEPYKSPSEGIE). N-linked (GlcNAc...) asparagine glycosylation occurs at Asn-2361. Over residues 2475–2486 (YPTSTLPSTEPY) the composition is skewed to low complexity. Phosphoserine is present on residues Ser-2585 and Ser-2586. Asn-2626 is a glycosylation site (N-linked (GlcNAc...) asparagine). 3 O-linked (Xyl...) (chondroitin sulfate) serine glycosylation sites follow: Ser-2696, Ser-2697, and Ser-2741. Residues 2853–2908 (LGGNVHRTEPPSMSRDPALDVSEDESKHKLLEELETSPTKPETSQDFPNKAKDHIP) are disordered. Residues 2888-2899 (TSPTKPETSQDF) are compositionally biased toward polar residues. A glycan (N-linked (GlcNAc...) asparagine) is linked at Asn-3029. An EGF-like 1 domain is found at 3051–3087 (GPDLCKTNPCLNGGTCYPTETSYVCTCAPGYSGDQCE). 11 disulfides stabilise this stretch: Cys-3055/Cys-3066, Cys-3060/Cys-3075, Cys-3077/Cys-3086, Cys-3093/Cys-3104, Cys-3098/Cys-3113, Cys-3115/Cys-3124, Cys-3131/Cys-3142, Cys-3159/Cys-3251, Cys-3227/Cys-3243, Cys-3258/Cys-3301, and Cys-3287/Cys-3314. Residues 3089 to 3125 (DFDECHSNPCRNGATCVDGFNTFRCLCLPSYVGALCE) enclose the EGF-like 2; calcium-binding domain. One can recognise a C-type lectin domain in the interval 3138-3252 (FQGQCYKYFA…CNYHLTYTCK (115 aa)). Residues 3256–3316 (VACGQPPVVE…WAMPKITCMN (61 aa)) form the Sushi domain. Residues Asn-3331 and Asn-3341 are each glycosylated (N-linked (GlcNAc...) asparagine). Residues 3331-3342 (NSSSAKDNSINT) are compositionally biased toward polar residues. The tract at residues 3331–3357 (NSSSAKDNSINTSKHEHRWSRRQETRR) is disordered.

The protein belongs to the aggrecan/versican proteoglycan family. As to quaternary structure, interacts with FBLN1. Phosphorylated by FAM20C in the extracellular medium. Post-translationally, proteolytically cleaved by ADAMTS5 and ADAMTS15 in the pericellular matrix surrounding myoblasts, facilitating myoblast contact and fusion which is required for skeletal muscle development and regeneration. In terms of tissue distribution, expressed in the retina (at protein level). Isoform V2: Only expressed in brain.

Its subcellular location is the secreted. It localises to the extracellular space. The protein localises to the extracellular matrix. It is found in the cell projection. The protein resides in the cilium. Its subcellular location is the photoreceptor outer segment. It localises to the interphotoreceptor matrix. May play a role in intercellular signaling and in connecting cells with the extracellular matrix. May take part in the regulation of cell motility, growth and differentiation. Binds hyaluronic acid. This is Versican core protein (Vcan) from Mus musculus (Mouse).